Consider the following 194-residue polypeptide: Imidazoleglycerol-phosphate dehydratase (194 aa).

This sequence belongs to the imidazoleglycerol-phosphate dehydratase family.

The protein localises to the cytoplasm. The catalysed reaction is D-erythro-1-(imidazol-4-yl)glycerol 3-phosphate = 3-(imidazol-4-yl)-2-oxopropyl phosphate + H2O. Its pathway is amino-acid biosynthesis; L-histidine biosynthesis; L-histidine from 5-phospho-alpha-D-ribose 1-diphosphate: step 6/9. The sequence is that of Imidazoleglycerol-phosphate dehydratase from Caldicellulosiruptor bescii (strain ATCC BAA-1888 / DSM 6725 / KCTC 15123 / Z-1320) (Anaerocellum thermophilum).